Reading from the N-terminus, the 3907-residue chain is A-kinase anchor protein 9 (3907 aa).

Basic and acidic residues predominate over residues 1–14; that stretch reads MEDEERQKKLEAGK. Positions 1-57 are disordered; the sequence is MEDEERQKKLEAGKAKLAQFRQRKAQSDGQSPSKKQKKKRKTSSSKHDVSAHHDLNI. Positions 34–44 are enriched in basic residues; it reads KKQKKKRKTSS. Over residues 45-56 the composition is skewed to basic and acidic residues; sequence SKHDVSAHHDLN. Coiled-coil stretches lie at residues 152–902, 932–1010, 1088–1173, 1241–1268, 1324–1380, 1422–1447, and 1573–1647; these read DSPT…ELHL, EVVE…ENVQ, QPSE…QTMK, ELQD…EEYN, KLSS…ESTV, VKEE…VAKV, and SMDA…DNEN. Position 153 is a phosphoserine (S153). S1327 is modified (phosphoserine). The span at 1682-1692 shows a compositional bias: low complexity; it reads STQTQNGNENQ. Residues 1682 to 1713 form a disordered region; the sequence is STQTQNGNENQGEVEEQTFKEKELDRKPEDVP. Residues 1698-1711 are compositionally biased toward basic and acidic residues; sequence QTFKEKELDRKPED. The residue at position 1765 (S1765) is a Phosphoserine. Coiled-coil stretches lie at residues 1845–2443, 2532–2549, 2591–2764, 3061–3088, 3120–3466, and 3583–3685; these read NISS…VEKI, ETEM…IVEE, QLRE…SKKA, LNCL…ADRR, ELLE…NLNE, and SLTE…NDSL. A PKA-RII subunit binding domain region spans residues 2542-2555; sequence NLQKIVEEKVAAAL. Residues 3377–3405 form a disordered region; that stretch reads RQQMEKDRQVHRKTLQTEQEANTEGQKKM. Residues S3690, S3842, S3865, and S3897 each carry the phosphoserine modification.

In terms of assembly, interacts with the regulatory region of protein kinase N (PKN), protein phosphatase 2A (PP2A), protein phosphatase 1 (PP1) and the immature non-phosphorylated form of PKC epsilon. Interacts with CIP4 and FNBP1. Interacts with chloride intracellular channel proteins CLIC1, CLIC4 and CLIC5. CSNK1D binding promotes its centrosomal subcellular location. Interacts with GM130/GOLGA2; leading to recruitment to the Golgi apparatus. Interacts with KCNQ1; targets protein kinase A (PKA) catalytic and regulatory subunits and protein phosphatase 1 (PP1), to the heterodimer KCNQ1-KCNE1. Interacts with PDE4DIP isoform 13/MMG8/SMYLE; this interaction stabilizes both proteins. In complex with PDE4DIP isoform 13, recruits CAMSAP2 to the Golgi apparatus. Forms a pericentrosomal complex with CDK5RAP2, EB1/MAPRE1 and PDE4DIP isoform 13; within this complex, MAPRE1 binding to CDK5RAP2 may be mediated by PDE4DIP. Interacts with MAPRE1 and MAPRE3. Interacts (via C-terminus) with CAMSAP2; this interaction is much stronger in the presence of PDE4DIP isoform 13/MMG8/SMYLE. Interacts with CAMSAP3. Interacts (via C-terminus) with the gamma-tubulin ring complex (gamma-TuRC), composed of gamma-tubulin, TUBGCP2, TUBGCP3, TUBGCP4, TUBGCP5 and TUBGCP6. In terms of tissue distribution, widely expressed. Isoform 4: Highly expressed in skeletal muscle and in pancreas.

The protein resides in the golgi apparatus. It is found in the cytoplasm. The protein localises to the cytoskeleton. It localises to the microtubule organizing center. Its subcellular location is the centrosome. Scaffolding protein that assembles several protein kinases and phosphatases on the centrosome and Golgi apparatus. Required to maintain the integrity of the Golgi apparatus. Required for microtubule nucleation at the cis-side of the Golgi apparatus. Required for association of the centrosomes with the poles of the bipolar mitotic spindle during metaphase. In complex with PDE4DIP isoform 13/MMG8/SMYLE, recruits CAMSAP2 to the Golgi apparatus and tethers non-centrosomal minus-end microtubules to the Golgi, an important step for polarized cell movement. In complex with PDE4DIP isoform 13/MMG8/SMYLE, EB1/MAPRE1 and CDK5RAP2, contributes to microtubules nucleation and extension also from the centrosome to the cell periphery. Functionally, associated with the N-methyl-D-aspartate receptor and is specifically found in the neuromuscular junction (NMJ) as well as in neuronal synapses, suggesting a role in the organization of postsynaptic specializations. This Homo sapiens (Human) protein is A-kinase anchor protein 9 (AKAP9).